Consider the following 266-residue polypeptide: Type 1 encapsulin shell protein (266 aa).

The protein belongs to the encapsulin family. Family 1 subfamily. In terms of assembly, homomultimeric. This encapsulin nanocompartment is formed by 60 subunits, and encloses one Dyp homohexamer; partially assembled 58-subunit compartments with and without cargo are also purified. May assemble the shell from dimers. Monomers form pentamers, which assemble to form hollow shells with pores 5-8 Angstroms in diameter where 3 pentamers meet.

It is found in the encapsulin nanocompartment. In terms of biological role, shell component of a type 1 encapsulin nanocompartment. Assembles into proteinaceous shells 23-24 nm in diameter with 2-2.5 nm thick walls. Endogenous cargo protein DyP (dye-decolorizing peroxidase) is targeted to the interior via its C-terminal extension; only 1 DyP hexamer is incorporated into each shell. Empty shells can be isolated in the absence of cargo. Cargo encapsulation probably precedes assembly of the nanocompartment; may assemble or disassemble via dimers, subcomplexes with a distinct preference for even numbers of subunits are detected. Nanocompartments are stable against mechanical forces; loaded nanocompartments are less stable than empty ones. Nanocompartments are stable between pH 5-10; they aggregate at pH 9-10 and start to disassemble at pH 11. They are stable in 1M NaCl, 1 M MgCl(2) and 1M CaCl(2), unstable in 20% DMSO (dimethylsulfoxide) and are stable in 20% but not 40% ethanol. The chain is Type 1 encapsulin shell protein from Brevibacterium linens.